A 217-amino-acid chain; its full sequence is Ribosomal RNA large subunit methyltransferase E (217 aa).

The S-adenosyl-L-methionine site is built by G71, W73, D91, D107, and D132. Residue K172 is the Proton acceptor of the active site.

Belongs to the class I-like SAM-binding methyltransferase superfamily. RNA methyltransferase RlmE family.

The protein localises to the cytoplasm. The catalysed reaction is uridine(2552) in 23S rRNA + S-adenosyl-L-methionine = 2'-O-methyluridine(2552) in 23S rRNA + S-adenosyl-L-homocysteine + H(+). Specifically methylates the uridine in position 2552 of 23S rRNA at the 2'-O position of the ribose in the fully assembled 50S ribosomal subunit. The sequence is that of Ribosomal RNA large subunit methyltransferase E from Psychromonas ingrahamii (strain DSM 17664 / CCUG 51855 / 37).